Consider the following 288-residue polypeptide: Shikimate dehydrogenase (NADP(+)) (288 aa).

Residues 15–17 (SKS) and T64 each bind shikimate. The Proton acceptor role is filled by K68. E83 is an NADP(+) binding site. Shikimate is bound by residues N92 and D117. NADP(+) is bound by residues 141 to 145 (GAGGA), 165 to 170 (NRTLSK), and M232. Position 234 (Y234) interacts with shikimate. An NADP(+)-binding site is contributed by G254.

It belongs to the shikimate dehydrogenase family. Homodimer.

The catalysed reaction is shikimate + NADP(+) = 3-dehydroshikimate + NADPH + H(+). The protein operates within metabolic intermediate biosynthesis; chorismate biosynthesis; chorismate from D-erythrose 4-phosphate and phosphoenolpyruvate: step 4/7. In terms of biological role, involved in the biosynthesis of the chorismate, which leads to the biosynthesis of aromatic amino acids. Catalyzes the reversible NADPH linked reduction of 3-dehydroshikimate (DHSA) to yield shikimate (SA). This is Shikimate dehydrogenase (NADP(+)) from Psychrobacter arcticus (strain DSM 17307 / VKM B-2377 / 273-4).